Reading from the N-terminus, the 378-residue chain is Anhydro-N-acetylmuramic acid kinase (378 aa).

ATP is bound at residue Gly-9–Asp-16.

The protein belongs to the anhydro-N-acetylmuramic acid kinase family.

It carries out the reaction 1,6-anhydro-N-acetyl-beta-muramate + ATP + H2O = N-acetyl-D-muramate 6-phosphate + ADP + H(+). It functions in the pathway amino-sugar metabolism; 1,6-anhydro-N-acetylmuramate degradation. The protein operates within cell wall biogenesis; peptidoglycan recycling. Its function is as follows. Catalyzes the specific phosphorylation of 1,6-anhydro-N-acetylmuramic acid (anhMurNAc) with the simultaneous cleavage of the 1,6-anhydro ring, generating MurNAc-6-P. Is required for the utilization of anhMurNAc either imported from the medium or derived from its own cell wall murein, and thus plays a role in cell wall recycling. The polypeptide is Anhydro-N-acetylmuramic acid kinase (Synechococcus sp. (strain ATCC 27144 / PCC 6301 / SAUG 1402/1) (Anacystis nidulans)).